The following is a 208-amino-acid chain: NAD(P)H-hydrate epimerase (208 aa).

In terms of domain architecture, YjeF N-terminal spans 11 to 208 (MRAKDQFTIN…VIVADDMGTY (198 aa)). 59–63 (NNGGD) contacts (6S)-NADPHX. K(+) contacts are provided by Asn60 and Asp122. (6S)-NADPHX-binding positions include 126–132 (GIGIDRP), Tyr137, and Asp155. K(+) is bound at residue Ser158.

This sequence belongs to the NnrE/AIBP family. Requires K(+) as cofactor.

The enzyme catalyses (6R)-NADHX = (6S)-NADHX. The catalysed reaction is (6R)-NADPHX = (6S)-NADPHX. Catalyzes the epimerization of the S- and R-forms of NAD(P)HX, a damaged form of NAD(P)H that is a result of enzymatic or heat-dependent hydration. This is a prerequisite for the S-specific NAD(P)H-hydrate dehydratase to allow the repair of both epimers of NAD(P)HX. This Limosilactobacillus fermentum (strain NBRC 3956 / LMG 18251) (Lactobacillus fermentum) protein is NAD(P)H-hydrate epimerase.